Consider the following 1092-residue polypeptide: MLHIKDLIWTLYFIGAAVALEVNIVPDQGEISLGESKFFLCQVSGEATDISWYSPTGEKLLNQQQISVVKNDEYTSTLTIYNVSSQDAGIYKCVASSETEGESEGTVNLKIYQKLTFKYAPTPQEFTEGEDAVIICDVSSSIPSIITWRHKGKDVIFKKDVRFVVLANNYLQIRGIKKTDEGNYRCEGRILARGEINYKDIQVIVNVPPLIQARQIRVNATANMDESVVLSCDADGFPDPEISWLKKGEPIEDGEEKISFNEDKSEMTIYRVEKEDEAEYSCIANNQAGEAEAIVLLKVYAKPKMTYVENKTTVELDEITLTCEASGDPIPSITWRTAHRNISSEEKTLDGHIVVKDHIRMSALTLKDIQYTDAGEYFCVASNPIGVDMQAMYFEVQYAPKIRGPVVVYTWEGNPVNITCDVLAHPSAAVSWFRDGQLLPSSNFSNIKIYNGPTFSSLEVNPDSENDFGNYNCSAVNSIGHESSEFILVQADTPSSPAIRKVEPYSSTVMIVFDEPDATGGVPILKYKAEWRVVGQEKWHARYYDAKEVSAESIITVTGLKPETSYMVKLSAVNGKGLGDSTPSQDFTTQPVKGEPSAPKLVGHLSEDGNSIKVDIIKQDDGGSPIRHYLVNYRALNAVDWKPEMRVPSNSHHVTLKTLEWNVDYEVIVVAENQQGKSKQARLSFRTTAKPTATTATSASTGLGTGAIVGILIVTFVLLLVVVDVTCFFLNKCGLLMCIAVNFCGKAGPGAKGKDIEEGKAAFSKDESKEPIVEVRTEEERTPNHDGSNQIEPNETTPLTEPEHPADSTATVEDMLPSVTTVTTNSDTITETFATAQNSPTSETTTLTSSTAPPPSTAPDSNTVQSVQATPSKAEVPTASSPPPTSSPKVAPLVDLSDTPTNNPSKAVANQAGALNPSAATSAAEPPTAIIKPVTTVPANTTSPPPTPEPKQVKQEQSGTKSPEKESAQPSTVKSPTEATKDESASLSNTKPLQGEDFQIDGGTFKTPEIDLAKDVFAALGTATPAAVASGKASELVSSTADTTVPPDSAKTEKTQVEENSKPEETDVKSTPAEVKTVPNEATQRNVNESKA.

Positions 1–19 are cleaved as a signal peptide; it reads MLHIKDLIWTLYFIGAAVA. 5 Ig-like C2-type domains span residues 20–108, 113–202, 208–295, 303–397, and 400–489; these read LEVN…GTVN, QKLT…KDIQ, PPLI…EAIV, PKMT…FEVQ, and PKIR…FILV. Over 20–705 the chain is Extracellular; the sequence is LEVNIVPDQG…ATSASTGLGT (686 aa). Disulfide bonds link C41–C93 and C136–C186. N-linked (GlcNAc...) asparagine glycosylation is present at N82. Residues 149 to 153 and 158 to 162 contribute to the heparin site; these read RHKGK and KKDVR. Residue N219 is glycosylated (N-linked (GlcNAc...) asparagine). The cysteines at positions 232 and 282 are disulfide-linked. 5 N-linked (GlcNAc...) asparagine glycosylation sites follow: N310, N341, N417, N443, and N472. C323 and C379 form a disulfide bridge. C420 and C473 form a disulfide bridge. Fibronectin type-III domains are found at residues 493-592 and 595-691; these read TPSS…TQPV and EPSA…TAKP. The helical transmembrane segment at 706 to 723 threads the bilayer; it reads GAIVGILIVTFVLLLVVV. Residues 724–1092 are Cytoplasmic-facing; sequence DVTCFFLNKC…TQRNVNESKA (369 aa). Residues 754–784 are compositionally biased toward basic and acidic residues; sequence KDIEEGKAAFSKDESKEPIVEVRTEEERTPN. Disordered stretches follow at residues 754 to 1005 and 1024 to 1092; these read KDIE…GGTF and TPAA…ESKA. Composition is skewed to low complexity over residues 820–832 and 839–851; these read TTVT…ITET and SPTS…TSST. Residues 860-871 show a composition bias toward polar residues; the sequence is DSNTVQSVQATP. Positions 917–929 are enriched in low complexity; the sequence is PSAATSAAEPPTA. The segment covering 968–978 has biased composition (polar residues); it reads AQPSTVKSPTE. Positions 1050–1068 are enriched in basic and acidic residues; the sequence is AKTEKTQVEENSKPEETDV. The span at 1080–1092 shows a compositional bias: polar residues; that stretch reads NEATQRNVNESKA.

In terms of processing, polysialylated by ST8SIA2 and ST8SIA4. Polysialylation modulates cell interactions by confering both attractive and repulsive properties that are highly regulated by ST8SIA2 and ST8SIA4. Polysialylation is formed on a-2,3-linked sialic acid of core glycans.

The protein localises to the cell membrane. Functionally, this protein is a cell adhesion molecule involved in neuron-neuron adhesion, neurite fasciculation, outgrowth of neurites, etc. The protein is Neural cell adhesion molecule 1-B of Xenopus laevis (African clawed frog).